The primary structure comprises 494 residues: UDP-N-acetylmuramoyl-L-alanyl-D-glutamate--2,6-diaminopimelate ligase (494 aa).

Ser-30 lines the UDP-N-acetyl-alpha-D-muramoyl-L-alanyl-D-glutamate pocket. 110–116 (GTNGKTS) contributes to the ATP binding site. UDP-N-acetyl-alpha-D-muramoyl-L-alanyl-D-glutamate contacts are provided by residues 152 to 153 (TT), Ser-179, and Arg-187. The residue at position 219 (Lys-219) is an N6-carboxylysine. Residues Arg-380, 404-407 (DNPR), Gly-456, and Glu-460 contribute to the meso-2,6-diaminopimelate site. A Meso-diaminopimelate recognition motif motif is present at residues 404 to 407 (DNPR).

The protein belongs to the MurCDEF family. MurE subfamily. The cofactor is Mg(2+). In terms of processing, carboxylation is probably crucial for Mg(2+) binding and, consequently, for the gamma-phosphate positioning of ATP.

The protein localises to the cytoplasm. The catalysed reaction is UDP-N-acetyl-alpha-D-muramoyl-L-alanyl-D-glutamate + meso-2,6-diaminopimelate + ATP = UDP-N-acetyl-alpha-D-muramoyl-L-alanyl-gamma-D-glutamyl-meso-2,6-diaminopimelate + ADP + phosphate + H(+). Its pathway is cell wall biogenesis; peptidoglycan biosynthesis. In terms of biological role, catalyzes the addition of meso-diaminopimelic acid to the nucleotide precursor UDP-N-acetylmuramoyl-L-alanyl-D-glutamate (UMAG) in the biosynthesis of bacterial cell-wall peptidoglycan. The chain is UDP-N-acetylmuramoyl-L-alanyl-D-glutamate--2,6-diaminopimelate ligase from Alkaliphilus metalliredigens (strain QYMF).